A 282-amino-acid chain; its full sequence is NADPH-dependent 7-cyano-7-deazaguanine reductase (282 aa).

A substrate-binding site is contributed by 88–90; that stretch reads IES. Residue 90–91 coordinates NADPH; it reads SK. The active-site Thioimide intermediate is Cys190. Asp197 functions as the Proton donor in the catalytic mechanism. 229 to 230 lines the substrate pocket; it reads HE. Residue 258–259 coordinates NADPH; it reads RG.

This sequence belongs to the GTP cyclohydrolase I family. QueF type 2 subfamily. As to quaternary structure, homodimer.

The protein resides in the cytoplasm. It catalyses the reaction 7-aminomethyl-7-carbaguanine + 2 NADP(+) = 7-cyano-7-deazaguanine + 2 NADPH + 3 H(+). Its pathway is tRNA modification; tRNA-queuosine biosynthesis. Catalyzes the NADPH-dependent reduction of 7-cyano-7-deazaguanine (preQ0) to 7-aminomethyl-7-deazaguanine (preQ1). The protein is NADPH-dependent 7-cyano-7-deazaguanine reductase of Salmonella schwarzengrund (strain CVM19633).